We begin with the raw amino-acid sequence, 372 residues long: Glutamate 5-kinase (372 aa).

Residue lysine 14 coordinates ATP. 3 residues coordinate substrate: serine 54, aspartate 141, and asparagine 153. 173–174 (TD) is an ATP binding site. The PUA domain maps to 280 to 358 (RGHVVIDAGA…GEIESVLGYM (79 aa)).

Belongs to the glutamate 5-kinase family.

Its subcellular location is the cytoplasm. The catalysed reaction is L-glutamate + ATP = L-glutamyl 5-phosphate + ADP. It participates in amino-acid biosynthesis; L-proline biosynthesis; L-glutamate 5-semialdehyde from L-glutamate: step 1/2. Catalyzes the transfer of a phosphate group to glutamate to form L-glutamate 5-phosphate. The polypeptide is Glutamate 5-kinase (Burkholderia lata (strain ATCC 17760 / DSM 23089 / LMG 22485 / NCIMB 9086 / R18194 / 383)).